Consider the following 212-residue polypeptide: Orotate phosphoribosyltransferase (212 aa).

K26 provides a ligand contact to 5-phospho-alpha-D-ribose 1-diphosphate. 34–35 (FF) is an orotate binding site. Residues 72 to 73 (YK), R98, K99, K102, H104, and 123 to 131 (DDVITAGTA) contribute to the 5-phospho-alpha-D-ribose 1-diphosphate site. T127 and R155 together coordinate orotate.

Belongs to the purine/pyrimidine phosphoribosyltransferase family. PyrE subfamily. Homodimer. It depends on Mg(2+) as a cofactor.

The catalysed reaction is orotidine 5'-phosphate + diphosphate = orotate + 5-phospho-alpha-D-ribose 1-diphosphate. Its pathway is pyrimidine metabolism; UMP biosynthesis via de novo pathway; UMP from orotate: step 1/2. Its function is as follows. Catalyzes the transfer of a ribosyl phosphate group from 5-phosphoribose 1-diphosphate to orotate, leading to the formation of orotidine monophosphate (OMP). In Marinobacter nauticus (strain ATCC 700491 / DSM 11845 / VT8) (Marinobacter aquaeolei), this protein is Orotate phosphoribosyltransferase.